We begin with the raw amino-acid sequence, 434 residues long: Isocitrate lyase (434 aa).

Residue 91–93 (SGW) participates in substrate binding. Mg(2+) is bound at residue Asp-157. Cys-195 functions as the Proton acceptor in the catalytic mechanism. Substrate-binding positions include 196–197 (GH), Arg-232, 317–321 (NCSPS), and Thr-351.

Belongs to the isocitrate lyase/PEP mutase superfamily. Isocitrate lyase family. In terms of assembly, homotetramer. Mg(2+) is required as a cofactor.

It catalyses the reaction D-threo-isocitrate = glyoxylate + succinate. It functions in the pathway carbohydrate metabolism; glyoxylate cycle; (S)-malate from isocitrate: step 1/2. In terms of biological role, involved in the metabolic adaptation in response to environmental changes. Catalyzes the reversible formation of succinate and glyoxylate from isocitrate, a key step of the glyoxylate cycle, which operates as an anaplerotic route for replenishing the tricarboxylic acid cycle during growth on fatty acid substrates. In Salmonella typhimurium (strain LT2 / SGSC1412 / ATCC 700720), this protein is Isocitrate lyase (aceA).